Consider the following 142-residue polypeptide: Transcriptional regulator MraZ (142 aa).

SpoVT-AbrB domains follow at residues 5-51 (ASAL…PRPE) and 77-120 (AADV…DAAT).

This sequence belongs to the MraZ family. Forms oligomers.

It is found in the cytoplasm. The protein resides in the nucleoid. The protein is Transcriptional regulator MraZ of Ralstonia pickettii (strain 12J).